The chain runs to 431 residues: Ribosomal RNA small subunit methyltransferase B (431 aa).

Residues 254-260, D277, D303, and D322 contribute to the S-adenosyl-L-methionine site; that span reads CAAPGGK. C375 acts as the Nucleophile in catalysis.

The protein belongs to the class I-like SAM-binding methyltransferase superfamily. RsmB/NOP family.

It localises to the cytoplasm. It catalyses the reaction cytidine(967) in 16S rRNA + S-adenosyl-L-methionine = 5-methylcytidine(967) in 16S rRNA + S-adenosyl-L-homocysteine + H(+). In terms of biological role, specifically methylates the cytosine at position 967 (m5C967) of 16S rRNA. The polypeptide is Ribosomal RNA small subunit methyltransferase B (Klebsiella pneumoniae subsp. pneumoniae (strain ATCC 700721 / MGH 78578)).